We begin with the raw amino-acid sequence, 226 residues long: ATP synthase subunit a (226 aa).

A run of 5 helical transmembrane segments spans residues leucine 18–leucine 38, phenylalanine 74–phenylalanine 94, leucine 100–isoleucine 120, leucine 158–glycine 180, and isoleucine 197–leucine 217.

It belongs to the ATPase A chain family. F-type ATPases have 2 components, CF(1) - the catalytic core - and CF(0) - the membrane proton channel. CF(1) has five subunits: alpha(3), beta(3), gamma(1), delta(1), epsilon(1). CF(0) has three main subunits: a, b and c.

It localises to the mitochondrion inner membrane. Functionally, mitochondrial membrane ATP synthase (F(1)F(0) ATP synthase or Complex V) produces ATP from ADP in the presence of a proton gradient across the membrane which is generated by electron transport complexes of the respiratory chain. F-type ATPases consist of two structural domains, F(1) - containing the extramembraneous catalytic core and F(0) - containing the membrane proton channel, linked together by a central stalk and a peripheral stalk. During catalysis, ATP synthesis in the catalytic domain of F(1) is coupled via a rotary mechanism of the central stalk subunits to proton translocation. Key component of the proton channel; it may play a direct role in the translocation of protons across the membrane. This chain is ATP synthase subunit a (mt:ATPase6), found in Anopheles gambiae (African malaria mosquito).